The sequence spans 588 residues: Nuclear hormone receptor family member nhr-23 (588 aa).

The tract at residues leucine 50–serine 73 is disordered. The span at alanine 52–threonine 64 shows a compositional bias: polar residues. The segment at residues valine 160 to phenylalanine 235 is a DNA-binding region (nuclear receptor). NR C4-type zinc fingers lie at residues cysteine 163 to cysteine 183 and cysteine 199 to cysteine 223. In terms of domain architecture, NR LBD spans proline 345–aspartate 586.

It belongs to the nuclear hormone receptor family. NR1 subfamily. Expressed in the germline and oocytes and is a maternal gene product. In males and sperm-producing hermaphrodites, expressed in early pachytene spermatocytes, increasing in level throughout late pachytene. Expression is undetectable in meiotically dividing spermatocytes or mature spermatids.

It localises to the nucleus. Orphan nuclear receptor. Transcription factor. Modulates expression of target genes, such as Period protein homolog lin-42 and microRNA let-7, by binding to hormone response elements (HRE). Involved in promoting oscillatory expression of the primary transcripts of let-7 and paralogous microRNAs miR-48, miR-84, and miR-241. Plays a role in normal development and required to regulate each larval molt. Involved in regulating both the frequency and number of molts, acting as part of a negative feedback loop with the let-7 family of microRNAs, perhaps contributing to a self-sustaining molecular-genetic oscillator. Positively modulates expression of collagen and hedgehog-related genes. Involved in development of the gonad and associated epidermal structures. Required in spermatogenesis, acting following the sperm/oocyte cell fate decision, downstream of the canonical sex-determination pathway. Involved in regulating formation of the sperm-specific fibrous body-membranous organelle (FB-MO) complexes, acting independently of transcription regulator spe-44. This chain is Nuclear hormone receptor family member nhr-23, found in Caenorhabditis elegans.